Consider the following 587-residue polypeptide: Phosphatidylinositol-3-phosphatase SAC1 (587 aa).

Over 1 to 520 (MAATAYEHLK…SPLSVPRDWK (520 aa)) the chain is Cytoplasmic. The 330-residue stretch at 122-451 (LNHVLSTDGF…ANACAKQYAG (330 aa)) folds into the SAC domain. Residues 452–587 (TGALKTDFTR…PRLVQKEKID (136 aa)) form an essential for phosphatidylinositol-4-phosphate phosphatase activity region. Lysine 456 carries the post-translational modification N6-acetyllysine. Residues 521-541 (FLALPIIMVVAFSMCIICLLM) form a helical membrane-spanning segment. Topologically, residues 542–548 (AGDTWTE) are lumenal. The helical transmembrane segment at 549-569 (TLAYVLFWGVASIGTFFIILY) threads the bilayer. At 570-587 (NGKDFVDAPRLVQKEKID) the chain is on the cytoplasmic side.

As to quaternary structure, interacts with TMEM39A. Interacts with SEC23A and SEC24A; this interaction is reduced in the absence of TMEM39A. Interacts with PLEKHA3 and VAPA and/or VAPB to form a ternary complex. As to expression, detected in spleen, lung, liver, skeletal muscle, kidney, testis and in cerebellar Purkinje cells (at protein level). Ubiquitous. Highly expressed in brain, spleen, liver and kidney.

The protein resides in the endoplasmic reticulum membrane. Its subcellular location is the golgi apparatus membrane. The enzyme catalyses a 1,2-diacyl-sn-glycero-3-phospho-(1D-myo-inositol-3-phosphate) + H2O = a 1,2-diacyl-sn-glycero-3-phospho-(1D-myo-inositol) + phosphate. It carries out the reaction a 1,2-diacyl-sn-glycero-3-phospho-(1D-myo-inositol 4-phosphate) + H2O = a 1,2-diacyl-sn-glycero-3-phospho-(1D-myo-inositol) + phosphate. Functionally, phosphoinositide phosphatase which catalyzes the hydrolysis of phosphatidylinositol 4-phosphate (PtdIns(4)P), phosphatidylinositol 3-phosphate (PtdIns(3)P) and has low activity towards phosphatidylinositol-3,5-bisphosphate (PtdIns(3,5)P2). Shows a very robust PtdIns(4)P phosphatase activity when it binds PtdIns(4)P in a 'cis' configuration in the cellular environment, with much less activity seen when it binds PtdIns(4)P in 'trans' configuration. PtdIns(4)P phosphatase activity (when it binds PtdIns(4)P in 'trans' configuration) is enhanced in the presence of PLEKHA3. This chain is Phosphatidylinositol-3-phosphatase SAC1 (Sacm1l), found in Rattus norvegicus (Rat).